The sequence spans 128 residues: Small ribosomal subunit protein uS11 (128 aa).

It belongs to the universal ribosomal protein uS11 family. In terms of assembly, part of the 30S ribosomal subunit. Interacts with proteins S7 and S18. Binds to IF-3.

Its function is as follows. Located on the platform of the 30S subunit, it bridges several disparate RNA helices of the 16S rRNA. Forms part of the Shine-Dalgarno cleft in the 70S ribosome. This chain is Small ribosomal subunit protein uS11, found in Ligilactobacillus salivarius (strain UCC118) (Lactobacillus salivarius).